A 208-amino-acid chain; its full sequence is Putative thymidylate kinase (208 aa).

The tract at residues 12–19 is defective ATP-binding; it reads GIDGTGTS.

Belongs to the thymidylate kinase family.

It carries out the reaction dTMP + ATP = dTDP + ADP. This is Putative thymidylate kinase (tmk) from Treponema pallidum (strain Nichols).